Here is a 144-residue protein sequence, read N- to C-terminus: Putative 2'-deoxynucleoside 5'-phosphate N-hydrolase 1 (144 aa).

Substrate is bound by residues 7–13 (YFCGSIR), tyrosine 22, histidine 39, glutamate 83, and 107–109 (SGM).

Belongs to the 2'-deoxynucleoside 5'-phosphate N-hydrolase 1 family. Monomer and homodimer.

The protein resides in the cytoplasm. Its subcellular location is the nucleus. It carries out the reaction a pyrimidine 2'-deoxyribonucleoside 5'-phosphate + H2O = a pyrimidine nucleobase + 2-deoxy-D-ribose 5-phosphate. The enzyme catalyses a purine 2'-deoxyribonucleoside 5'-phosphate + H2O = a purine nucleobase + 2-deoxy-D-ribose 5-phosphate. Its function is as follows. Catalyzes the cleavage of the N-glycosidic bond of deoxyribonucleoside 5'-monophosphates to yield deoxyribose 5-phosphate and a purine or pyrimidine base. This is Putative 2'-deoxynucleoside 5'-phosphate N-hydrolase 1 from Trichoplax adhaerens (Trichoplax reptans).